The primary structure comprises 598 residues: Urease subunit alpha (598 aa).

Residues 136 to 598 form the Urease domain; that stretch reads GGLDTHVHWL…APLAQRYFLF (463 aa). 3 residues coordinate Ni(2+): histidine 141, histidine 143, and lysine 223. Position 223 is an N6-carboxylysine (lysine 223). Histidine 225 is a substrate binding site. The Ni(2+) site is built by histidine 252 and histidine 278. Catalysis depends on histidine 326, which acts as the Proton donor. Residue aspartate 366 coordinates Ni(2+).

It belongs to the metallo-dependent hydrolases superfamily. Urease alpha subunit family. As to quaternary structure, heterotrimer of UreA (gamma), UreB (beta) and UreC (alpha) subunits. Three heterotrimers associate to form the active enzyme. It depends on Ni cation as a cofactor. Post-translationally, carboxylation allows a single lysine to coordinate two nickel ions.

The protein resides in the cytoplasm. It carries out the reaction urea + 2 H2O + H(+) = hydrogencarbonate + 2 NH4(+). It functions in the pathway nitrogen metabolism; urea degradation; CO(2) and NH(3) from urea (urease route): step 1/1. The polypeptide is Urease subunit alpha (Ureaplasma urealyticum serovar 10 (strain ATCC 33699 / Western)).